Reading from the N-terminus, the 273-residue chain is Putative pyruvate, phosphate dikinase regulatory protein (273 aa).

Position 153–160 (153–160 (GVSRTSKS)) interacts with ADP.

Belongs to the pyruvate, phosphate/water dikinase regulatory protein family. PDRP subfamily.

It carries out the reaction N(tele)-phospho-L-histidyl/L-threonyl-[pyruvate, phosphate dikinase] + ADP = N(tele)-phospho-L-histidyl/O-phospho-L-threonyl-[pyruvate, phosphate dikinase] + AMP + H(+). The catalysed reaction is N(tele)-phospho-L-histidyl/O-phospho-L-threonyl-[pyruvate, phosphate dikinase] + phosphate + H(+) = N(tele)-phospho-L-histidyl/L-threonyl-[pyruvate, phosphate dikinase] + diphosphate. In terms of biological role, bifunctional serine/threonine kinase and phosphorylase involved in the regulation of the pyruvate, phosphate dikinase (PPDK) by catalyzing its phosphorylation/dephosphorylation. The sequence is that of Putative pyruvate, phosphate dikinase regulatory protein from Ehrlichia ruminantium (strain Gardel).